A 395-amino-acid polypeptide reads, in one-letter code: RNA polymerase II elongation factor ELL3 (395 aa).

Disordered stretches follow at residues 129 to 177 (LTEG…SEPM) and 189 to 281 (PSRE…SPEE). The residue at position 242 (S242) is a Phosphoserine. Residues 243–260 (QEGEDWGQDEDEEGDEDG) are compositionally biased toward acidic residues. Positions 269–279 (SAPSASESPSP) are enriched in low complexity. The OCEL domain occupies 283 to 393 (PDYLLQYRAI…LILEFEEKNR (111 aa)).

This sequence belongs to the ELL/occludin family. Component of the little elongation complex (LEC), at least composed of ELL (ELL, ELL2 or ELL3), ZC3H8, ICE1 and ICE2. Component of the super elongation complex (SEC), at least composed of EAF1, EAF2, CDK9, MLLT3/AF9, AFF (AFF1 or AFF4), the P-TEFb complex and ELL (ELL, ELL2 or ELL3). Interacts with AFF4. In terms of tissue distribution, actively expressed in embryonic stem cells (ES cells), while it is weakly expressed in differentiated cells.

It is found in the nucleus. In terms of biological role, enhancer-binding elongation factor that specifically binds enhancers in embryonic stem cells (ES cells), marks them, and is required for their future activation during stem cell specification. Elongation factor component of the super elongation complex (SEC), a complex required to increase the catalytic rate of RNA polymerase II transcription by suppressing transient pausing by the polymerase at multiple sites along the DNA. Component of the little elongation complex (LEC), a complex required to regulate small nuclear RNA (snRNA) gene transcription by RNA polymerase II and III. Does not only bind to enhancer regions of active genes, but also marks the enhancers that are in a poised or inactive state in ES cells and is required for establishing proper RNA polymerase II occupancy at developmentally regulated genes in a cohesin-dependent manner. Probably required for priming developmentally regulated genes for later recruitment of the super elongation complex (SEC), for transcriptional activation during differentiation. Required for recruitment of P-TEFb within SEC during differentiation. Probably preloaded on germ cell chromatin, suggesting that it may prime gene activation by marking enhancers as early as in the germ cells. Promoting epithelial-mesenchymal transition (EMT). The polypeptide is RNA polymerase II elongation factor ELL3 (Ell3) (Mus musculus (Mouse)).